A 467-amino-acid polypeptide reads, in one-letter code: Argininosuccinate lyase (467 aa).

It belongs to the lyase 1 family. Argininosuccinate lyase subfamily.

The protein resides in the cytoplasm. The enzyme catalyses 2-(N(omega)-L-arginino)succinate = fumarate + L-arginine. It participates in amino-acid biosynthesis; L-arginine biosynthesis; L-arginine from L-ornithine and carbamoyl phosphate: step 3/3. The protein is Argininosuccinate lyase of Anaeromyxobacter dehalogenans (strain 2CP-C).